The sequence spans 389 residues: Shewanella-like protein phosphatase 1 (389 aa).

The N-terminal 53 residues, 1 to 53 (MASLYLNSLLPLPPSHPQKLLEPSSSSLLSTSNGNELALKPIVINGDPPTFVS), are a transit peptide targeting the chloroplast. The Mn(2+) site is built by Asp-64, His-66, Asp-102, and Asn-137. His-138 functions as the Proton donor in the catalytic mechanism. The Mn(2+) site is built by His-242 and His-314.

Belongs to the metallophosphoesterase superfamily. SLP family. The cofactor is Mn(2+). Expressed in rosettes leaves, shoots and flowers (at protein level).

The protein localises to the plastid. The protein resides in the chloroplast. Shows phosphatase activity, hydrolyzing the artificial substrate para-nitrophenylphosphate (pNPP) in vitro. In Arabidopsis thaliana (Mouse-ear cress), this protein is Shewanella-like protein phosphatase 1.